The following is a 119-amino-acid chain: UPF0231 protein ECA3777 (119 aa).

Belongs to the UPF0231 family.

The chain is UPF0231 protein ECA3777 from Pectobacterium atrosepticum (strain SCRI 1043 / ATCC BAA-672) (Erwinia carotovora subsp. atroseptica).